The chain runs to 348 residues: Putative methylesterase 14, chloroplastic (348 aa).

Disordered stretches follow at residues Met1–Ser29 and Gly60–Phe80. Residues Met1–Leu76 constitute a chloroplast transit peptide. Ser77 carries the phosphoserine modification. The active-site Acyl-ester intermediate is the Ser172. Residues Asp299 and His327 each act as charge relay system in the active site.

This sequence belongs to the AB hydrolase superfamily. Methylesterase family.

It localises to the plastid. It is found in the chloroplast. In terms of biological role, putative methylesterase. The sequence is that of Putative methylesterase 14, chloroplastic from Arabidopsis thaliana (Mouse-ear cress).